The primary structure comprises 434 residues: Zinc finger CCCH domain-containing protein 10 (434 aa).

The interval 1 to 37 is disordered; that stretch reads MPDRDSYANGTGSSGGGPGGGGSEEASGAGVGSGGAS. Residues 12–35 show a composition bias toward gly residues; the sequence is GSSGGGPGGGGSEEASGAGVGSGG. 3 C3H1-type zinc fingers span residues 36-63, 73-99, and 134-161; these read ASSD…HPDM, KNEF…HGSK, and KEEV…HLQR. 2 positions are modified to omega-N-methylarginine: arginine 185 and arginine 186. Residues 196–207 show a composition bias toward basic and acidic residues; that stretch reads PDRGFEDHEPGP. Positions 196 to 217 are disordered; the sequence is PDRGFEDHEPGPKRRRGGCCPP. Residues 234–280 are a coiled coil; that stretch reads GVECRLLEEENAMLRKRVEELKKQVSNLLATNEVLLEQNAQFRNQAK. Polar residues predominate over residues 314-330; sequence TTLSSQALQPRPVSQQE. The segment at 314–362 is disordered; the sequence is TTLSSQALQPRPVSQQELVAPAGAPAAPPTNAAPPAAPPPPPPHLTPEI. Residues 339–358 are compositionally biased toward pro residues; the sequence is AAPPTNAAPPAAPPPPPPHL.

The protein resides in the nucleus. Specific regulator of miRNA biogenesis. Binds, via the C3H1-type zinc finger domains, to the binding motif 5'-GCAGCGC-3' on microRNA pri-MIR143 and negatively regulates the processing to mature microRNA. The protein is Zinc finger CCCH domain-containing protein 10 (ZC3H10) of Homo sapiens (Human).